The sequence spans 159 residues: MSSGFSHMDGDGSITMVDVGDKKDTRRTAIVRGKVEMAPATLDMLVKQALPKGDVLTTAKVAGIQAAKRTWELIPLCHPLFLSYVDVRFTVDESLPGVVVEAEARTTGQTGVEMEALVAAQVAAMTIYDMCKAVQKDIVLRDCRLVYKSGGKSGEFRAC.

Residues 76–78 and 114–115 each bind substrate; these read LCH and ME. The active site involves Asp-129.

It belongs to the MoaC family. In terms of assembly, homohexamer; trimer of dimers.

It carries out the reaction (8S)-3',8-cyclo-7,8-dihydroguanosine 5'-triphosphate = cyclic pyranopterin phosphate + diphosphate. It participates in cofactor biosynthesis; molybdopterin biosynthesis. Its function is as follows. Catalyzes the conversion of (8S)-3',8-cyclo-7,8-dihydroguanosine 5'-triphosphate to cyclic pyranopterin monophosphate (cPMP). The chain is Cyclic pyranopterin monophosphate synthase from Oleidesulfovibrio alaskensis (strain ATCC BAA-1058 / DSM 17464 / G20) (Desulfovibrio alaskensis).